A 355-amino-acid chain; its full sequence is cAMP-dependent protein kinase catalytic subunit PRKX (355 aa).

M1 bears the N-acetylmethionine mark. The interval 1 to 42 (MEPPAGAAATVKDPDHDPVKTKVSAPAADPKPRTSSQKAGHS) is disordered. Residues 46–300 (WDTIATVGTG…AEDIKRHRWF (255 aa)) form the Protein kinase domain. ATP is bound by residues 52 to 60 (VGTGTFGRV) and K75. The Proton acceptor role is filled by D169. T200 carries the phosphothreonine modification. The AGC-kinase C-terminal domain maps to 301–355 (RGVEWESVPQRKLKPPIVPKLSGDGDISNFETYPESELDKTPSVSDKDLETFKNF). The tract at residues 316–355 (PIVPKLSGDGDISNFETYPESELDKTPSVSDKDLETFKNF) is disordered. The segment covering 337–355 (ELDKTPSVSDKDLETFKNF) has biased composition (basic and acidic residues).

Belongs to the protein kinase superfamily. AGC Ser/Thr protein kinase family. cAMP subfamily. In terms of assembly, like other cAMP-dependent protein kinases, the inactive holoenzyme is probably composed of 2 PRKX catalytic subunits and a dimer of regulatory subunits. Interacts (cAMP-dependent) specifically with the regulatory subunits PRKAR1A and PRKAR1B. Compared to other cAMP-dependent serine/threonine protein kinases, does not interact with the 2 other PKA regulatory subunits PRKAR2A and PRKAR2B. Interacts with PIN1 (via WW domain). Interacts with cAMP-dependent protein kinase inhibitor/PKI proteins; inhibits PRKX. Interacts with GPKOW. Interacts with SMAD6. Interacts with PKD1; involved in differentiation and controlled morphogenesis of the kidney. Post-translationally, phosphorylated; autophosphorylates in vitro. Widely expressed.

The protein resides in the cytoplasm. The protein localises to the nucleus. It catalyses the reaction L-seryl-[protein] + ATP = O-phospho-L-seryl-[protein] + ADP + H(+). The catalysed reaction is L-threonyl-[protein] + ATP = O-phospho-L-threonyl-[protein] + ADP + H(+). Its activity is regulated as follows. Binding of cAMP to the PRKAR1A or PRKAR1B regulatory subunits induces dissociation of the holoenzyme heterotetramer. The released monomeric PRKX is then active and able to phosphorylate its substrates. Functionally, serine/threonine protein kinase regulated by and mediating cAMP signaling in cells. Acts through phosphorylation of downstream targets that may include CREB, SMAD6 and PKD1 and has multiple functions in cellular differentiation and epithelial morphogenesis. Regulates myeloid cell differentiation through SMAD6 phosphorylation. Involved in nephrogenesis by stimulating renal epithelial cell migration and tubulogenesis. Also involved in angiogenesis through stimulation of endothelial cell proliferation, migration and vascular-like structure formation. This is cAMP-dependent protein kinase catalytic subunit PRKX (Prkx) from Mus musculus (Mouse).